A 160-amino-acid chain; its full sequence is Lipoprotein signal peptidase (160 aa).

2 consecutive transmembrane segments (helical) span residues 59–79 (PEGI…YVWI) and 84–104 (SPLF…NLID). Active-site residues include Asp113 and Asp139. The helical transmembrane segment at 132–152 (WPIFNIADACITIGACLLFFF) threads the bilayer.

The protein belongs to the peptidase A8 family.

The protein resides in the cell inner membrane. The catalysed reaction is Release of signal peptides from bacterial membrane prolipoproteins. Hydrolyzes -Xaa-Yaa-Zaa-|-(S,diacylglyceryl)Cys-, in which Xaa is hydrophobic (preferably Leu), and Yaa (Ala or Ser) and Zaa (Gly or Ala) have small, neutral side chains.. Its pathway is protein modification; lipoprotein biosynthesis (signal peptide cleavage). Its function is as follows. This protein specifically catalyzes the removal of signal peptides from prolipoproteins. This Chlorobaculum parvum (strain DSM 263 / NCIMB 8327) (Chlorobium vibrioforme subsp. thiosulfatophilum) protein is Lipoprotein signal peptidase.